The primary structure comprises 509 residues: Pancreatic secretory granule membrane major glycoprotein GP2 (509 aa).

The first 21 residues, 1–21 (MVGSYVLWLALASCILTLASP), serve as a signal peptide directing secretion. Residues 36–56 (DPCQNYTLLDEPSRSTENTEG) are D10C. 10 cysteine pairs are disulfide-bonded: Cys-38-Cys-132, Cys-60-Cys-147, Cys-82-Cys-120, Cys-88-Cys-152, Cys-113-Cys-121, Cys-162-Cys-172, Cys-166-Cys-181, Cys-183-Cys-213, Cys-201-Cys-292, and Cys-233-Cys-256. N-linked (GlcNAc...) asparagine glycans are attached at residues Asn-40, Asn-97, and Asn-109. The EGF-like domain occupies 158-202 (ATDKCKNLCRPEEACSFLNGTWDCFCRSDLNSSDVHSLQPRLNCG). N-linked (GlcNAc...) asparagine glycosylation is found at Asn-176, Asn-188, and Asn-232. Residues 200–293 (NCGAKEIQVS…TILNINFQCA (94 aa)) are ZP-N. In terms of domain architecture, ZP spans 200–456 (NCGAKEIQVS…PCCSRSQQRS (257 aa)). N-linked (GlcNAc...) asparagine glycosylation is found at Asn-263 and Asn-314. The interval 294–317 (YPLDMKVSLQTALHPIVSSLNISV) is flexible ZP-N/ZP-C linker. The interval 318–329 (DGEGEFTVRMAL) is internal hydrophobic patch (IHP). Residues 318–456 (DGEGEFTVRM…PCCSRSQQRS (139 aa)) form a ZP-C region. 3 disulfide bridges follow: Cys-373-Cys-433, Cys-394-Cys-449, and Cys-438-Cys-445. The tract at residues 463–471 (PARVLDLGP) is external hydrophobic patch (EHP). Asp-484 carries GPI-anchor amidated aspartate lipidation. Residues 485-509 (GTPSTAGFLLAWPMLLLPILLAELF) constitute a propeptide, removed in mature form.

Interacts with SYCN. Interacts with bacterial adhesin fimH. Post-translationally, N-glycosylated. Expressed in pancreas.

It is found in the zymogen granule membrane. The protein localises to the secreted. The protein resides in the cell membrane. Its subcellular location is the apical cell membrane. It localises to the membrane raft. It is found in the endosome. Functionally, functions as an intestinal M-cell transcytotic receptor specific of type-I-piliated bacteria that participates in the mucosal immune response toward these bacteria. At the apical membrane of M-cells it binds fimH, a protein of the bacteria type I pilus tip. Internalizes bound bacteria, like E.coli and S.typhimurium, from the lumen of the intestine and delivers them, through M-cells, to the underlying organized lymphoid follicles where they are captured by antigen-presenting dendritic cells to elicit a mucosal immune response. The protein is Pancreatic secretory granule membrane major glycoprotein GP2 of Canis lupus familiaris (Dog).